Here is a 116-residue protein sequence, read N- to C-terminus: Promotilin (116 aa).

The N-terminal stretch at 1 to 25 (MVSRKAVAVLLMVHVAVMLASQTEA) is a signal peptide. The interval 39-74 (REKERNKGQKKSLIVQQRSEEVGPLDPVEPPEEEEN) is disordered.

The protein belongs to the motilin family.

The protein resides in the secreted. In terms of biological role, plays an important role in the regulation of interdigestive gastrointestinal motility and indirectly causes rhythmic contraction of duodenal and colonic smooth muscle. This chain is Promotilin (MLN), found in Felis catus (Cat).